Here is a 446-residue protein sequence, read N- to C-terminus: Na(+)-translocating NADH-quinone reductase subunit A (446 aa).

This sequence belongs to the NqrA family. Composed of six subunits; NqrA, NqrB, NqrC, NqrD, NqrE and NqrF.

The enzyme catalyses a ubiquinone + n Na(+)(in) + NADH + H(+) = a ubiquinol + n Na(+)(out) + NAD(+). In terms of biological role, NQR complex catalyzes the reduction of ubiquinone-1 to ubiquinol by two successive reactions, coupled with the transport of Na(+) ions from the cytoplasm to the periplasm. NqrA to NqrE are probably involved in the second step, the conversion of ubisemiquinone to ubiquinol. This chain is Na(+)-translocating NADH-quinone reductase subunit A, found in Histophilus somni (strain 129Pt) (Haemophilus somnus).